The following is a 739-amino-acid chain: Long-chain-fatty-acid--CoA ligase ACSBG2 (739 aa).

ATP is bound by residues 287–295 (TSGTTGQPK), 478–483 (ELYGMS), Asp-556, Arg-571, and Lys-684.

Belongs to the ATP-dependent AMP-binding enzyme family. Bubblegum subfamily.

Its subcellular location is the cytoplasm. The catalysed reaction is a long-chain fatty acid + ATP + CoA = a long-chain fatty acyl-CoA + AMP + diphosphate. It carries out the reaction (5Z,8Z,11Z,14Z)-eicosatetraenoate + ATP + CoA = (5Z,8Z,11Z,14Z)-eicosatetraenoyl-CoA + AMP + diphosphate. The enzyme catalyses hexadecanoate + ATP + CoA = hexadecanoyl-CoA + AMP + diphosphate. It catalyses the reaction (9Z)-octadecenoate + ATP + CoA = (9Z)-octadecenoyl-CoA + AMP + diphosphate. The catalysed reaction is (9Z,12Z)-octadecadienoate + ATP + CoA = (9Z,12Z)-octadecadienoyl-CoA + AMP + diphosphate. It carries out the reaction tetracosanoate + ATP + CoA = tetracosanoyl-CoA + AMP + diphosphate. Catalyzes the conversion of fatty acids such as long chain and very long-chain fatty acids to their active form acyl-CoAs for both synthesis of cellular lipids, and degradation via beta-oxidation. Can activate diverse saturated, monosaturated and polyunsaturated fatty acids. This chain is Long-chain-fatty-acid--CoA ligase ACSBG2, found in Xenopus laevis (African clawed frog).